The chain runs to 281 residues: 4-diphosphocytidyl-2-C-methyl-D-erythritol kinase (281 aa).

Lys-11 is a catalytic residue. 92 to 102 (LVSAGLAGGSA) is a binding site for ATP. Asp-132 is a catalytic residue.

The protein belongs to the GHMP kinase family. IspE subfamily.

The enzyme catalyses 4-CDP-2-C-methyl-D-erythritol + ATP = 4-CDP-2-C-methyl-D-erythritol 2-phosphate + ADP + H(+). It participates in isoprenoid biosynthesis; isopentenyl diphosphate biosynthesis via DXP pathway; isopentenyl diphosphate from 1-deoxy-D-xylulose 5-phosphate: step 3/6. In terms of biological role, catalyzes the phosphorylation of the position 2 hydroxy group of 4-diphosphocytidyl-2C-methyl-D-erythritol. In Ehrlichia ruminantium (strain Welgevonden), this protein is 4-diphosphocytidyl-2-C-methyl-D-erythritol kinase.